A 111-amino-acid polypeptide reads, in one-letter code: Photosystem II reaction center Psb28 protein (111 aa).

The protein belongs to the Psb28 family. In terms of assembly, part of the photosystem II complex.

It is found in the cellular thylakoid membrane. This is Photosystem II reaction center Psb28 protein from Crocosphaera subtropica (strain ATCC 51142 / BH68) (Cyanothece sp. (strain ATCC 51142)).